The chain runs to 261 residues: MENEESGKSFVVQWNNSEGGLSEGPLSVLWSLIESYKVDIFDVSLSRITRDFLSFLRISETLSLELSAEYALMAANLIYLKSKALLPDPGFEEEDYEPPLPPELVEKLLEHKKFQLTAKKLSEMDQTQTGVFRRESNVTLDEEDNWLDVSLLDLISAFHEILESQSVEAEIPTLLTAPHRFTVEEKMEKILFTLREKKEISFPELFEREKPEKAEIVATFLALLELSKQRILRAKQHKLFGEIRLFLVEGHWNGTEQQSKD.

The protein belongs to the ScpA family. As to quaternary structure, component of a cohesin-like complex composed of ScpA, ScpB and the Smc homodimer, in which ScpA and ScpB bind to the head domain of Smc. The presence of the three proteins is required for the association of the complex with DNA.

The protein localises to the cytoplasm. Its function is as follows. Participates in chromosomal partition during cell division. May act via the formation of a condensin-like complex containing Smc and ScpB that pull DNA away from mid-cell into both cell halves. The protein is Segregation and condensation protein A of Leptospira interrogans serogroup Icterohaemorrhagiae serovar copenhageni (strain Fiocruz L1-130).